The sequence spans 651 residues: Cytoplasmic tyrosine-protein kinase BMX (651 aa).

One can recognise a PH domain in the interval K4 to R111. The Btk-type zinc-finger motif lies at N113–Y149. 4 residues coordinate Zn(2+): H121, C132, C133, and C143. Positions W272–V368 constitute an SH2 domain. Residues I393–R646 form the Protein kinase domain. Residues L399 to V407 and K421 each bind ATP. D512 functions as the Proton acceptor in the catalytic mechanism. Y542 is subject to Phosphotyrosine; by SRC and autocatalysis.

Belongs to the protein kinase superfamily. Tyr protein kinase family. TEC subfamily. In terms of assembly, interacts with BCAR1, CAV1, MYD88, PTK2/FAK1, RUFY1, RUFY2, STAT3, TIRAP and TNFRSF1B. It depends on Zn(2+) as a cofactor. In terms of processing, phosphorylated in response to protein I/II and to LPS. Phosphorylation at Tyr-542 by SRC and by autocatalysis leads to activation and is required for STAT3 phosphorylation by BMX. Specifically expressed in the endocardium of the developing heart as well as in the endocardium of the left ventricle and in the endothelium of large arteries in adult mice.

The protein resides in the cytoplasm. The catalysed reaction is L-tyrosyl-[protein] + ATP = O-phospho-L-tyrosyl-[protein] + ADP + H(+). With respect to regulation, TEK and vascular endothelial growth factor receptor 1 (FLT1) stimulate BMX tyrosine kinase activity. Activated by integrins through the mediation of PTK2/FAK1. Activated by TNF through the mediation of TNFRSF1B. Functionally, non-receptor tyrosine kinase that plays central but diverse modulatory roles in various signaling processes involved in the regulation of actin reorganization, cell migration, cell proliferation and survival, cell adhesion, and apoptosis. Participates in signal transduction stimulated by growth factor receptors, cytokine receptors, G-protein coupled receptors, antigen receptors and integrins. Induces tyrosine phosphorylation of BCAR1 in response to integrin regulation. Activation of BMX by integrins is mediated by PTK2/FAK1, a key mediator of integrin signaling events leading to the regulation of actin cytoskeleton and cell motility. Plays a critical role in TNF-induced angiogenesis, and implicated in the signaling of TEK and FLT1 receptors, 2 important receptor families essential for angiogenesis. Required for the phosphorylation and activation of STAT3, a transcription factor involved in cell differentiation. Also involved in interleukin-6 (IL6) induced differentiation. Also plays a role in programming adaptive cytoprotection against extracellular stress in different cell systems, salivary epithelial cells, brain endothelial cells, and dermal fibroblasts. May be involved in regulation of endocytosis through its interaction with an endosomal protein RUFY1. May also play a role in the growth and differentiation of hematopoietic cells; as well as in signal transduction in endocardial and arterial endothelial cells. This Mus musculus (Mouse) protein is Cytoplasmic tyrosine-protein kinase BMX (Bmx).